Consider the following 606-residue polypeptide: Protein spire homolog 2 (606 aa).

The KIND domain occupies 21 to 219 (LSLEEVLKSY…RALFLETLEL (199 aa)). The interval 147–181 (KHCGSNAAKDEGYSGQDEEEEEEEEEEEEGAGRGI) is disordered. Positions 162-175 (QDEEEEEEEEEEEE) are enriched in acidic residues. WH2 domains are found at residues 263–277 (QLMKELRQGVKLKKV) and 357–374 (LHDRVLAEIRQDHKLRPV). Disordered stretches follow at residues 438–464 (DEDSPDGVDMRRVESSPTPLKRDRSFS) and 517–537 (CRSLSSDDRSSDPGGDSASHG). The segment covering 445–464 (VDMRRVESSPTPLKRDRSFS) has biased composition (basic and acidic residues). Positions 554 to 574 (LALTVDGVINVRRILVKAEME) are spir-box.

Belongs to the spire family.

The protein localises to the cytoplasm. It is found in the cytoskeleton. Its subcellular location is the cytosol. The protein resides in the cell membrane. It localises to the cytoplasmic vesicle membrane. In terms of biological role, acts as an actin nucleation factor, remains associated with the slow-growing pointed end of the new filament. Involved in intracellular vesicle transport along actin fibers, providing a novel link between actin cytoskeleton dynamics and intracellular transport. Required for asymmetric spindle positioning and asymmetric cell division during oocyte meiosis. Required for normal formation of the cleavage furrow and for polar body extrusion during female germ cell meiosis. Also acts in the nucleus: together with SPIRE1 and SPIRE2, promotes assembly of nuclear actin filaments in response to DNA damage in order to facilitate movement of chromatin and repair factors after DNA damage. The polypeptide is Protein spire homolog 2 (spire2) (Danio rerio (Zebrafish)).